A 326-amino-acid polypeptide reads, in one-letter code: Peroxidase 39 (326 aa).

A signal peptide spans 1–23; the sequence is MTRFGLALLMILVIQGLVTFSEA. 4 cysteine pairs are disulfide-bonded: C34–C114, C67–C72, C120–C322, and C199–C232. H65 functions as the Proton acceptor in the catalytic mechanism. 5 residues coordinate Ca(2+): D66, V69, G71, D73, and S75. A glycan (N-linked (GlcNAc...) asparagine) is linked at N79. Residue P162 coordinates substrate. N-linked (GlcNAc...) asparagine glycosylation is present at N167. Residue H192 coordinates heme b. T193 lines the Ca(2+) pocket. N-linked (GlcNAc...) asparagine glycans are attached at residues N208 and N238. Residues D245, S248, and D253 each contribute to the Ca(2+) site.

Belongs to the peroxidase family. Classical plant (class III) peroxidase subfamily. Requires heme b as cofactor. Ca(2+) serves as cofactor. As to expression, slightly expressed in roots.

The protein resides in the secreted. It carries out the reaction 2 a phenolic donor + H2O2 = 2 a phenolic radical donor + 2 H2O. In terms of biological role, removal of H(2)O(2), oxidation of toxic reductants, biosynthesis and degradation of lignin, suberization, auxin catabolism, response to environmental stresses such as wounding, pathogen attack and oxidative stress. These functions might be dependent on each isozyme/isoform in each plant tissue. The polypeptide is Peroxidase 39 (PER39) (Arabidopsis thaliana (Mouse-ear cress)).